A 656-amino-acid polypeptide reads, in one-letter code: Nuclear elongation and deformation protein 1 (656 aa).

A phosphoserine mark is found at serine 99 and serine 103. Polar residues predominate over residues 99–118; that stretch reads SPIVSPTTSPKQTPSINVTE. Residues 99–121 are disordered; it reads SPIVSPTTSPKQTPSINVTEPQD. Threonine 106 is modified (phosphothreonine). Phosphoserine occurs at positions 107, 159, and 286. Disordered regions lie at residues 282-328 and 587-656; these read VYGH…VSES and SDEE…ENAV. The segment covering 291-300 has biased composition (low complexity); the sequence is PSRTPASPKS. Phosphoserine is present on residues serine 318, serine 321, and serine 587. The segment covering 318-328 has biased composition (polar residues); it reads SEQSLSPVSES. Positions 596–609 are enriched in low complexity; it reads KSTSKSPKTPKNTK. A compositionally biased stretch (acidic residues) spans 640–656; that stretch reads FEGEEDEEGEEDVENAV.

It belongs to the lipin family. Interacts with dis3, pim1 and nup189.

Its function is as follows. May have a role in the maintenance of the nuclear envelope structure and in minichromosome stability. The chain is Nuclear elongation and deformation protein 1 (ned1) from Schizosaccharomyces pombe (strain 972 / ATCC 24843) (Fission yeast).